A 604-amino-acid polypeptide reads, in one-letter code: Prostaglandin G/H synthase 2 (604 aa).

Residues 1–17 form the signal peptide; sequence MLARALLLCAAVALSHA. An EGF-like domain is found at 18-55; the sequence is ANPCCSNPCQNRGVCMTMGFDQYKCDCTRTGFYGENCS. 4 disulfide bridges follow: Cys21–Cys32, Cys22–Cys145, Cys26–Cys42, and Cys44–Cys54. A glycan (N-linked (GlcNAc...) asparagine) is linked at Asn53. Arg106 lines the substrate pocket. N-linked (GlcNAc...) asparagine glycosylation is present at Asn130. His193 acts as the Proton acceptor in catalysis. Tyr341 provides a ligand contact to substrate. Catalysis depends on Tyr371, which acts as the For cyclooxygenase activity. His374 lines the heme b pocket. An N-linked (GlcNAc...) asparagine glycan is attached at Asn396. S-nitrosocysteine is present on Cys526. Cys555 and Cys561 are oxidised to a cystine. Ser565 is subject to O-acetylserine. The N-linked (GlcNAc...) asparagine glycan is linked to Asn580.

This sequence belongs to the prostaglandin G/H synthase family. As to quaternary structure, homodimer. It depends on heme b as a cofactor. In terms of processing, S-nitrosylation by NOS2 (iNOS) activates enzyme activity. S-nitrosylation may take place on different Cys residues in addition to Cys-526. Post-translationally, acetylated at Ser-565 by SPHK1. During neuroinflammation, acetylation by SPHK1 promotes neuronal secretion of specialized preresolving mediators (SPMs), especially 15-R-lipoxin A4, which results in an increase of phagocytic microglia. Highest expression in kidney and urinary bladder.

The protein resides in the microsome membrane. It is found in the endoplasmic reticulum membrane. It localises to the nucleus inner membrane. The protein localises to the nucleus outer membrane. It carries out the reaction (5Z,8Z,11Z,14Z)-eicosatetraenoate + AH2 + 2 O2 = prostaglandin H2 + A + H2O. It catalyses the reaction (5Z,8Z,11Z,14Z)-eicosatetraenoate + 2 O2 = prostaglandin G2. The enzyme catalyses prostaglandin G2 + AH2 = prostaglandin H2 + A + H2O. The catalysed reaction is (5Z,8Z,11Z,14Z,17Z)-eicosapentaenoate + 2 O2 = prostaglandin G3. It carries out the reaction prostaglandin G3 + AH2 = prostaglandin H3 + A + H2O. It catalyses the reaction (8Z,11Z,14Z)-eicosatrienoate + 2 O2 = prostaglandin G1. The enzyme catalyses prostaglandin G1 + AH2 = prostaglandin H1 + A + H2O. The catalysed reaction is 2-(5Z,8Z,11Z,14Z)-eicosatetraenoyl-sn-glycero-3-phosphoethanolamine + 2 O2 = 2-(prostaglandin G2)-sn-glycero-3-phosphoethanolamine. It carries out the reaction 2-(prostaglandin G2)-sn-glycero-3-phosphoethanolamine + AH2 = 2-(prostaglandin H2)-sn-glycero-3-phosphoethanolamine + A + H2O. It catalyses the reaction 2-(5Z,8Z,11Z,14Z)-eicosatetraenoyl-sn-glycero-3-phosphocholine + 2 O2 = 2-(prostaglandin G2)-sn-glycero-3-phosphocholine. The enzyme catalyses 2-(prostaglandin G2)-sn-glycero-3-phosphocholine + AH2 = 2-(prostaglandin H2)-sn-glycero-3-phosphocholine + A + H2O. The catalysed reaction is (15S)-hydroperoxy-(5Z,8Z,11Z,13E)-eicosatetraenoate + AH2 = (15S)-hydroxy-(5Z,8Z,11Z,13E)-eicosatetraenoate + A + H2O. It carries out the reaction 2-(5Z,8Z,11Z,14Z)-eicosatetraenoyl-sn-glycero-3-phosphocholine + AH2 + O2 = 2-[(15S)-hydroxy-(5Z,8Z,11Z,13E)-eicosatetraenoyl]-sn-glycero-3-phosphocholine + A + H2O. It catalyses the reaction 2-(5Z,8Z,11Z,14Z)-eicosatetraenoyl-sn-glycero-3-phosphocholine + AH2 + O2 = 2-[(15R)-hydroxy-(5Z,8Z,11Z,13E)-eicosatetraenoyl]-sn-glycero-3-phosphocholine + A + H2O. The enzyme catalyses 2-(5Z,8Z,11Z,14Z)-eicosatetraenoyl-sn-glycero-3-phosphocholine + AH2 + O2 = 2-[(11R)-hydroxy-(5Z,8Z,12E,14Z)-eicosatetraenoyl]-sn-glycero-3-phosphocholine + A + H2O. The catalysed reaction is (9Z,12Z)-octadecadienoate + AH2 + O2 = 9-hydroxy-(10E,12Z)-octadecadienoate + A + H2O. It carries out the reaction (9Z,12Z)-octadecadienoate + AH2 + O2 = 13-hydroxy-(9Z,11E)-octadecadienoate + A + H2O. It catalyses the reaction (5Z,8Z,11Z,14Z)-eicosatetraenoate + AH2 + O2 = (15R)-hydroxy-(5Z,8Z,11Z,13E)-eicosatetraenoate + A + H2O. The enzyme catalyses (5Z,8Z,11Z,14Z)-eicosatetraenoate + AH2 + O2 = (11R)-hydroxy-(5Z,8Z,12E,14Z)-eicosatetraenoate + A + H2O. The catalysed reaction is (5Z,8Z,11Z,14Z,17Z)-eicosapentaenoate + AH2 + O2 = (11R)-hydroxy-(5Z,8Z,12E,14Z,17Z)-eicosapentaenoate + A + H2O. It carries out the reaction (5Z,8Z,11Z,14Z,17Z)-eicosapentaenoate + AH2 + O2 = (18S)-hydroxy-(5Z,8Z,11Z,14Z,16E)-eicosapentaenoate + A + H2O. It catalyses the reaction (5Z,8Z,11Z,14Z,17Z)-eicosapentaenoate + AH2 + O2 = (18R)-hydroxy-(5Z,8Z,11Z,14Z,16E)-eicosapentaenoate + A + H2O. The enzyme catalyses (5Z,8Z,11Z,14Z,17Z)-eicosapentaenoate + AH2 + O2 = (15R)-hydroxy-(5Z,8Z,11Z,13E,17Z)-eicosapentaenoate + A + H2O. The catalysed reaction is (5Z,8Z,11Z,14Z,17Z)-eicosapentaenoate + AH2 + O2 = (15S)-hydroxy-(5Z,8Z,11Z,13E,17Z)-eicosapentaenoate + A + H2O. It carries out the reaction (7Z,10Z,13Z,16Z,19Z)-docosapentaenoate + AH2 + O2 = 13R-hydroxy-(7Z,10Z,14E,16Z,19Z)-docosapentaenoate + A + H2O. It catalyses the reaction (4Z,7Z,10Z,13Z,16Z,19Z)-docosahexaenoate + AH2 + O2 = 13-hydroxy-(4Z,7Z,10Z,14E,16Z,19Z)-docosahexaenoate + A + H2O. The enzyme catalyses (5S)-hydroxy-(6E,8Z,11Z,14Z)-eicosatetraenoate + AH2 + O2 = (5S,15R)-dihydroxy-(6E,8Z,11Z,13E)-eicosatetraenoate + A + H2O. The catalysed reaction is (4Z,7Z,10Z,13Z,16Z,19Z)-docosahexaenoate + AH2 + O2 = 17R-hydroxy-(4Z,7Z,10Z,13Z,15E,19Z)-docosahexaenoate + A + H2O. It carries out the reaction (5S)-hydroxy-(6E,8Z,11Z,14Z)-eicosatetraenoate + AH2 + O2 = (5S,15S)-dihydroxy-(6E,8Z,11Z,13E)-eicosatetraenoate + A + H2O. It catalyses the reaction (5S)-hydroxy-(6E,8Z,11Z,14Z)-eicosatetraenoate + AH2 + O2 = (5S,11R)-dihydroxy-(6E,8Z,12E,14Z)-eicosatetraenoate + A + H2O. The enzyme catalyses 2-(5Z,8Z,11Z,14Z-eicosatetraenoyl)-glycerol + 2 O2 = 2-glyceryl-prostaglandin G2. The catalysed reaction is 2-glyceryl-prostaglandin G2 + AH2 = 2-glyceryl-prostaglandin H2 + A + H2O. It carries out the reaction (5Z,8Z,11Z,14Z)-eicosatetraenoate + O2 = (15R)-hydroperoxy-(5Z,8Z,11Z,13E)-eicosatetraenoate. It catalyses the reaction (5Z,8Z,11Z,14Z)-eicosatetraenoate + O2 = 11R-hydroperoxy-(5Z,8Z,12E,14Z)-eicosatetraenoate. The enzyme catalyses (9Z,12Z)-octadecadienoate + AH2 + O2 = (9R)-hydroxy-(10E,12Z)-octadecadienoate + A + H2O. The catalysed reaction is (9Z,12Z)-octadecadienoate + AH2 + O2 = (9S)-hydroxy-(10E,12Z)-octadecadienoate + A + H2O. It carries out the reaction (9Z,12Z)-octadecadienoate + AH2 + O2 = (13S)-hydroxy-(9Z,11E)-octadecadienoate + A + H2O. It catalyses the reaction (9Z,12Z)-octadecadienoate + AH2 + O2 = (13R)-hydroxy-(9Z,11E)-octadecadienoate + A + H2O. It participates in lipid metabolism; prostaglandin biosynthesis. Its function is as follows. Dual cyclooxygenase and peroxidase in the biosynthesis pathway of prostanoids, a class of C20 oxylipins mainly derived from arachidonate ((5Z,8Z,11Z,14Z)-eicosatetraenoate, AA, C20:4(n-6)), with a particular role in the inflammatory response. The cyclooxygenase activity oxygenates AA to the hydroperoxy endoperoxide prostaglandin G2 (PGG2), and the peroxidase activity reduces PGG2 to the hydroxy endoperoxide prostaglandin H2 (PGH2), the precursor of all 2-series prostaglandins and thromboxanes. This complex transformation is initiated by abstraction of hydrogen at carbon 13 (with S-stereochemistry), followed by insertion of molecular O2 to form the endoperoxide bridge between carbon 9 and 11 that defines prostaglandins. The insertion of a second molecule of O2 (bis-oxygenase activity) yields a hydroperoxy group in PGG2 that is then reduced to PGH2 by two electrons. Similarly catalyzes successive cyclooxygenation and peroxidation of dihomo-gamma-linoleate (DGLA, C20:3(n-6)) and eicosapentaenoate (EPA, C20:5(n-3)) to corresponding PGH1 and PGH3, the precursors of 1- and 3-series prostaglandins. In an alternative pathway of prostanoid biosynthesis, converts 2-arachidonoyl lysophopholipids to prostanoid lysophopholipids, which are then hydrolyzed by intracellular phospholipases to release free prostanoids. Metabolizes 2-arachidonoyl glycerol yielding the glyceryl ester of PGH2, a process that can contribute to pain response. Generates lipid mediators from n-3 and n-6 polyunsaturated fatty acids (PUFAs) via a lipoxygenase-type mechanism. Oxygenates PUFAs to hydroperoxy compounds and then reduces them to corresponding alcohols. Plays a role in the generation of resolution phase interaction products (resolvins) during both sterile and infectious inflammation. Metabolizes docosahexaenoate (DHA, C22:6(n-3)) to 17R-HDHA, a precursor of the D-series resolvins (RvDs). As a component of the biosynthetic pathway of E-series resolvins (RvEs), converts eicosapentaenoate (EPA, C20:5(n-3)) primarily to 18S-HEPE that is further metabolized by ALOX5 and LTA4H to generate 18S-RvE1 and 18S-RvE2. In vascular endothelial cells, converts docosapentaenoate (DPA, C22:5(n-3)) to 13R-HDPA, a precursor for 13-series resolvins (RvTs) shown to activate macrophage phagocytosis during bacterial infection. In activated leukocytes, contributes to oxygenation of hydroxyeicosatetraenoates (HETE) to diHETES (5,15-diHETE and 5,11-diHETE). Can also use linoleate (LA, (9Z,12Z)-octadecadienoate, C18:2(n-6)) as substrate and produce hydroxyoctadecadienoates (HODEs) in a regio- and stereospecific manner,being (9R)-HODE ((9R)-hydroxy-(10E,12Z)-octadecadienoate) and (13S)-HODE ((13S)-hydroxy-(9Z,11E)-octadecadienoate) its major products. During neuroinflammation, plays a role in neuronal secretion of specialized preresolving mediators (SPMs) 15R-lipoxin A4 that regulates phagocytic microglia. This is Prostaglandin G/H synthase 2 (PTGS2) from Oryctolagus cuniculus (Rabbit).